A 3411-amino-acid polypeptide reads, in one-letter code: Genome polyprotein (3411 aa).

Residues 1–104 (MSGRKAQGKT…LSSRKRRSHD (104 aa)) lie on the Cytoplasmic side of the membrane. Residues 38–72 (PGPSRGVQGFIFFFLFNILTGKKITAQLKRLWKML) are hydrophobic; homodimerization of capsid protein C. A propeptide spans 102 to 121 (SHDVLTVQFLILGMLLMTGG) (ER anchor for the capsid protein C, removed in mature form by serine protease NS3). The chain crosses the membrane as a helical span at residues 105-125 (VLTVQFLILGMLLMTGGVTLM). The Extracellular segment spans residues 126 to 244 (RKNRWLLLNV…GERQLQKIER (119 aa)). N-linked (GlcNAc...) asparagine; by host glycans are attached at residues asparagine 134 and asparagine 150. Residues 245 to 265 (WFVRNPFFAVTALTIAYLVGS) form a helical membrane-spanning segment. Topologically, residues 266 to 270 (NMTQR) are cytoplasmic. The helical transmembrane segment at 271–285 (VVIALLVLAVGPAYS) threads the bilayer. Residues 286-730 (AHCIGVADRD…TVFGSAFQGL (445 aa)) lie on the Extracellular side of the membrane. 8 disulfide bridges follow: cysteine 288-cysteine 315, cysteine 345-cysteine 401, cysteine 345-cysteine 406, cysteine 359-cysteine 390, cysteine 377-cysteine 401, cysteine 377-cysteine 406, cysteine 467-cysteine 568, and cysteine 585-cysteine 615. A fusion peptide region spans residues 383 to 396 (DRGWGNGCGLFGKG). A helical membrane pass occupies residues 731 to 751 (FGGLNWITKVIMGAVLIWVGF). Residues 752-757 (NTRNMT) lie on the Cytoplasmic side of the membrane. A helical membrane pass occupies residues 758 to 778 (MSMSMILVGVIMMFLSLGVGA). At 779–1132 (DQGCAINFGK…LVRSWVTAGE (354 aa)) the chain is on the extracellular side. 6 disulfides stabilise this stretch: cysteine 782–cysteine 793, cysteine 833–cysteine 921, cysteine 957–cysteine 1002, cysteine 1058–cysteine 1107, cysteine 1069–cysteine 1091, and cysteine 1090–cysteine 1094. N-linked (GlcNAc...) asparagine; by host glycans are attached at residues asparagine 908 and asparagine 986. A helical membrane pass occupies residues 1133-1153 (IHAVPFGLVSMMIAMEVVLRK). Residues 1154–1201 (RQGPKQVLVGGVVLLGAMLVGQVTLLDLLELTVAVGLHFHEMNNGGDA) lie on the Cytoplasmic side of the membrane. Residues 1202–1222 (MYMALIAAFSVRPGLLIGFGL) traverse the membrane as a helical segment. The Lumenal segment spans residues 1223–1287 (RTLWSPRERL…ILPLMALLTP (65 aa)). Residues 1288–1308 (VTMAEVRLATMLFCTVVIIGV) traverse the membrane as a helical segment. Residues 1309-1355 (LHQNSKDTSMQKTIPLVALTLTSYLGLTQPFLGLCAFLATRIFGRRS) are Cytoplasmic-facing. A helical transmembrane segment spans residues 1356 to 1376 (IPVNEALAATGLVGVLAGLAF). At 1377–1378 (QE) the chain is on the lumenal side. A helical membrane pass occupies residues 1379 to 1399 (MENFLGPIAVGGILMMLVSVA). Over 1400–1456 (GRVDGLELKKLGEVSWEEEAEISGSSARYDVALSEQGEFKLLSEEKVPWDQVVMTSL) the chain is Cytoplasmic. The tract at residues 1407–1446 (LKKLGEVSWEEEAEISGSSARYDVALSEQGEFKLLSEEKV) is interacts with and activates NS3 protease. The segment at residues 1457 to 1477 (ALVGAAIHPFALLLVLAGWLF) is an intramembrane region (helical). At 1478–2157 (HVRRARRSGD…RNALSMMPEA (680 aa)) the chain is on the cytoplasmic side. The Peptidase S7 domain maps to 1485–1665 (SGDVLWDIPT…EVKEEGKEEL (181 aa)). Active-site charge relay system; for serine protease NS3 activity residues include histidine 1537, aspartate 1561, and serine 1622. The Helicase ATP-binding domain maps to 1669 to 1825 (PTMLKKGKTT…HSNGEIEDVQ (157 aa)). The interval 1673–1676 (KKGK) is important for RNA-binding. 1682 to 1689 (FHPGAGKT) contributes to the ATP binding site. The DEAH box signature appears at 1773 to 1776 (DEAH). A Helicase C-terminal domain is found at 1820 to 1997 (EIEDVQTDIP…VRGGMVAPLY (178 aa)). An N6-acetyllysine; by host modification is found at lysine 1877. A disordered region spans residues 1942–1961 (AAQRRGRIGRNPNRDGDSYY). The chain crosses the membrane as a helical span at residues 2158–2178 (MTIVMLFLLAGLLTSGMVIFF). Residues 2179–2186 (MSPKGISR) lie on the Lumenal side of the membrane. An intramembrane region (helical) is located at residues 2187-2207 (MSMAKGTMAGCGYLMFLGGVE). Over 2208–2209 (PT) the chain is Lumenal. A helical membrane pass occupies residues 2210-2230 (HISYIMLIFFVLMVVVIPEPG). Residues 2231 to 2241 (QQRSIQDNQVA) are Cytoplasmic-facing. A helical membrane pass occupies residues 2242–2256 (FLIIGILTLVSVVAA). Residues 2257–2293 (NELGMLEKTKEDLFGKKNLIPSGASPWSWPDLDLKPG) lie on the Lumenal side of the membrane. An intramembrane region (helical) is located at residues 2294–2314 (AAWTVYVGIVTMLSPMLHHWI). Residues 2315–2360 (KVEYGNLSLSGIAQSASVLSFMDKGIPFMKMNISVIMLLVSGWNSI) lie on the Lumenal side of the membrane. The helical transmembrane segment at 2361–2380 (TVMPLLCGIGCAMLHWSLIL) threads the bilayer. At 2381 to 2421 (PGIKAQQSKLAQRRVFHGVAKNPVVDGNPTVDIEEAPEMPA) the chain is on the cytoplasmic side. Residues 2422 to 2442 (LYEKKLALYLLLALSLASVAM) traverse the membrane as a helical segment. Over 2443 to 2445 (CRT) the chain is Lumenal. Residues 2446-2466 (PFSLDEGIVLASAALGPLIEG) traverse the membrane as a helical segment. Residues 2467–3411 (NTSLLWNGPM…DADLQPGELI (945 aa)) are Cytoplasmic-facing. The 265-residue stretch at 2507–2771 (GTANGKTLGE…DVTLPIGTRS (265 aa)) folds into the mRNA cap 0-1 NS5-type MT domain. Serine 2562 is a binding site for S-adenosyl-L-methionine. A Phosphoserine modification is found at serine 2562. Lysine 2567 acts as the For 2'-O-MTase activity in catalysis. Residues glycine 2592, tryptophan 2593, threonine 2610, leucine 2611, aspartate 2637, and valine 2638 each coordinate S-adenosyl-L-methionine. The For 2'-O-MTase activity role is filled by aspartate 2652. S-adenosyl-L-methionine is bound at residue isoleucine 2653. Active-site for 2'-O-MTase activity residues include lysine 2688 and glutamate 2724. Tyrosine 2726 contributes to the S-adenosyl-L-methionine binding site. The Nuclear localization signal motif lies at 2878 to 2911 (RKIMKVVNRWLFRHLAREKNPRLCTKEEFIAKVR). Zn(2+) is bound by residues glutamate 2945, histidine 2949, cysteine 2954, and cysteine 2957. The RdRp catalytic domain occupies 3035-3187 (GGLYADDTAG…RPIDDRFGLA (153 aa)). 3 residues coordinate Zn(2+): histidine 3222, cysteine 3238, and cysteine 3357.

It in the N-terminal section; belongs to the class I-like SAM-binding methyltransferase superfamily. mRNA cap 0-1 NS5-type methyltransferase family. Homodimer. Interacts (via N-terminus) with host EXOC1 (via C-terminus); this interaction results in EXOC1 degradation through the proteasome degradation pathway. As to quaternary structure, forms heterodimers with envelope protein E in the endoplasmic reticulum and Golgi. In terms of assembly, homodimer; in the endoplasmic reticulum and Golgi. Interacts with protein prM. Interacts with non-structural protein 1. Homodimer; Homohexamer when secreted. Interacts with envelope protein E. As to quaternary structure, interacts (via N-terminus) with serine protease NS3. In terms of assembly, forms a heterodimer with serine protease NS3. May form homooligomers. Forms a heterodimer with NS2B. Interacts with non-structural protein 2A (via N-terminus). Interacts with NS4B. Interacts with unphosphorylated RNA-directed RNA polymerase NS5; this interaction stimulates RNA-directed RNA polymerase NS5 guanylyltransferase activity. NS3 interacts with host PDCD6IP; this interaction contributes to virion release. As to quaternary structure, interacts with serine protease NS3. In terms of assembly, homodimer. Interacts with host STAT2; this interaction prevents the establishment of cellular antiviral state. Interacts with serine protease NS3. Interacts with host TRIM23; this interaction leads to NS5 ubiquitination. In terms of processing, specific enzymatic cleavages in vivo yield mature proteins. The nascent capsid protein C contains a C-terminal hydrophobic domain that act as a signal sequence for translocation of prM into the lumen of the ER. Mature capsid protein C is cleaved at a site upstream of this hydrophobic domain by NS3. prM is cleaved in post-Golgi vesicles by a host furin, releasing the mature small envelope protein M, and peptide pr. Non-structural protein 2A-alpha, a C-terminally truncated form of non-structural protein 2A, results from partial cleavage by NS3. Specific enzymatic cleavages in vivo yield mature proteins peptide 2K acts as a signal sequence and is removed from the N-terminus of NS4B by the host signal peptidase in the ER lumen. Signal cleavage at the 2K-4B site requires a prior NS3 protease-mediated cleavage at the 4A-2K site. Post-translationally, cleaved in post-Golgi vesicles by a host furin, releasing the mature small envelope protein M, and peptide pr. This cleavage is incomplete as up to 30% of viral particles still carry uncleaved prM. N-glycosylated. In terms of processing, N-glycosylated. The excreted form is glycosylated and this is required for efficient secretion of the protein from infected cells. Post-translationally, polyubiquitinated; ubiquitination is probably mediated by host TRIM23 and is prerequisite for NS5-STAT2 interaction. NS5 is not ISGylated or sumoylated. Acetylated by host KAT5. Acetylation modulates NS3 RNA-binding and unwinding activities and plays an important positive role for viral replication. In terms of processing, phosphorylated on serines residues. This phosphorylation may trigger NS5 nuclear localization.

It is found in the virion. Its subcellular location is the host nucleus. The protein localises to the host cytoplasm. The protein resides in the host perinuclear region. It localises to the secreted. It is found in the virion membrane. Its subcellular location is the host endoplasmic reticulum membrane. The enzyme catalyses Selective hydrolysis of -Xaa-Xaa-|-Yaa- bonds in which each of the Xaa can be either Arg or Lys and Yaa can be either Ser or Ala.. It catalyses the reaction RNA(n) + a ribonucleoside 5'-triphosphate = RNA(n+1) + diphosphate. The catalysed reaction is a ribonucleoside 5'-triphosphate + H2O = a ribonucleoside 5'-diphosphate + phosphate + H(+). It carries out the reaction ATP + H2O = ADP + phosphate + H(+). The enzyme catalyses a 5'-end (5'-triphosphoguanosine)-ribonucleoside in mRNA + S-adenosyl-L-methionine = a 5'-end (N(7)-methyl 5'-triphosphoguanosine)-ribonucleoside in mRNA + S-adenosyl-L-homocysteine. It catalyses the reaction a 5'-end (N(7)-methyl 5'-triphosphoguanosine)-ribonucleoside in mRNA + S-adenosyl-L-methionine = a 5'-end (N(7)-methyl 5'-triphosphoguanosine)-(2'-O-methyl-ribonucleoside) in mRNA + S-adenosyl-L-homocysteine + H(+). Functionally, plays a role in virus budding by binding to the cell membrane and gathering the viral RNA into a nucleocapsid that forms the core of a mature virus particle. During virus entry, may induce genome penetration into the host cytoplasm after hemifusion induced by the surface proteins. Can migrate to the cell nucleus where it modulates host functions. Its function is as follows. Inhibits RNA silencing by interfering with host Dicer. In terms of biological role, prevents premature fusion activity of envelope proteins in trans-Golgi by binding to envelope protein E at pH6.0. After virion release in extracellular space, gets dissociated from E dimers. Acts as a chaperone for envelope protein E during intracellular virion assembly by masking and inactivating envelope protein E fusion peptide. prM is the only viral peptide matured by host furin in the trans-Golgi network probably to avoid catastrophic activation of the viral fusion activity in acidic Golgi compartment prior to virion release. prM-E cleavage is inefficient, and many virions are only partially matured. These uncleaved prM would play a role in immune evasion. Functionally, may play a role in virus budding. Exerts cytotoxic effects by activating a mitochondrial apoptotic pathway through M ectodomain. May display a viroporin activity. Its function is as follows. Binds to host cell surface receptor and mediates fusion between viral and cellular membranes. Envelope protein is synthesized in the endoplasmic reticulum in the form of heterodimer with protein prM. They play a role in virion budding in the ER, and the newly formed immature particle is covered with 60 spikes composed of heterodimer between precursor prM and envelope protein E. The virion is transported to the Golgi apparatus where the low pH causes dissociation of PrM-E heterodimers and formation of E homodimers. prM-E cleavage is inefficient, and many virions are only partially matured. These uncleaved prM would play a role in immune evasion. In terms of biological role, involved in immune evasion, pathogenesis and viral replication. Once cleaved off the polyprotein, is targeted to three destinations: the viral replication cycle, the plasma membrane and the extracellular compartment. Essential for viral replication. Required for formation of the replication complex and recruitment of other non-structural proteins to the ER-derived membrane structures. Excreted as a hexameric lipoparticle that plays a role against host immune response. Antagonizing the complement function. Binds to the host macrophages and dendritic cells. Inhibits signal transduction originating from Toll-like receptor 3 (TLR3). Component of the viral RNA replication complex that functions in virion assembly and antagonizes the host immune response. Functionally, required cofactor for the serine protease function of NS3. May have membrane-destabilizing activity and form viroporins. Its function is as follows. Displays three enzymatic activities: serine protease, NTPase and RNA helicase. NS3 serine protease, in association with NS2B, performs its autocleavage and cleaves the polyprotein at dibasic sites in the cytoplasm: C-prM, NS2A-NS2B, NS2B-NS3, NS3-NS4A, NS4A-2K and NS4B-NS5. NS3 RNA helicase binds RNA and unwinds dsRNA in the 3' to 5' direction. Also plays a role in virus assembly. In terms of biological role, regulates the ATPase activity of the NS3 helicase activity. NS4A allows NS3 helicase to conserve energy during unwinding. Functions as a signal peptide for NS4B and is required for the interferon antagonism activity of the latter. Functionally, induces the formation of ER-derived membrane vesicles where the viral replication takes place. Inhibits interferon (IFN)-induced host STAT1 phosphorylation and nuclear translocation, thereby preventing the establishment of cellular antiviral state by blocking the IFN-alpha/beta pathway. Its function is as follows. Replicates the viral (+) and (-) RNA genome, and performs the capping of genomes in the cytoplasm. NS5 methylates viral RNA cap at guanine N-7 and ribose 2'-O positions. Besides its role in RNA genome replication, also prevents the establishment of cellular antiviral state by blocking the interferon-alpha/beta (IFN-alpha/beta) signaling pathway. IFN-I induces binding of NS5 to host IFN-activated transcription factor STAT2, preventing its transcriptional activity. Host TRIM23 is the E3 ligase that interacts with and polyubiquitinates NS5 to promote its binding to STAT2 and trigger IFN-I signaling inhibition. This is Genome polyprotein from Aedes aegypti (Yellowfever mosquito).